Reading from the N-terminus, the 402-residue chain is Coiled-coil domain-containing protein 188 (402 aa).

Disordered stretches follow at residues 1 to 30 (MEGL…GGGL), 50 to 74 (HSVQ…EGEA), and 108 to 131 (HPGS…PCPC). The stretch at 154-189 (GLLGSAEQSFLQLEQENHSLKRQNQELREQLGALLG) forms a coiled coil. A helical transmembrane segment spans residues 347–363 (LLLGALLVWTAAYVYVV).

It localises to the membrane. The sequence is that of Coiled-coil domain-containing protein 188 from Homo sapiens (Human).